We begin with the raw amino-acid sequence, 458 residues long: Monomethylamine methyltransferase MtmB1 (458 aa).

A non-standard amino acid (pyrrolysine) is located at residue O202.

The protein belongs to the monomethylamine methyltransferase family. In terms of assembly, can form a complex with MtmC.

The catalysed reaction is Co(I)-[methylamine-specific corrinoid protein] + methylamine + H(+) = methyl-Co(III)-[methylamine-specific corrinoid protein] + NH4(+). The protein operates within one-carbon metabolism; methanogenesis from methylamine. In terms of biological role, catalyzes the transfer of the methyl group from monomethylamine to the corrinoid cofactor of MtmC. This Methanosarcina acetivorans (strain ATCC 35395 / DSM 2834 / JCM 12185 / C2A) protein is Monomethylamine methyltransferase MtmB1 (mtmB1).